Reading from the N-terminus, the 1453-residue chain is MMLPQNSWHIDFGRCCCHQNLFSAVVTCILLLNSCFLISSFNGTDLELRLVNGDGPCSGTVEVKFQGQWGTVCDDGWNTTASTVVCKQLGCPFSFAMFRFGQAVTRHGKIWLDDVSCYGNESALWECQHREWGSHNCYHGEDVGVNCYGEANLGLRLVDGNNSCSGRVEVKFQERWGTICDDGWNLNTAAVVCRQLGCPSSFISSGVVNSPAVLRPIWLDDILCQGNELALWNCRHRGWGNHDCSHNEDVTLTCYDSSDLELRLVGGTNRCMGRVELKIQGRWGTVCHHKWNNAAADVVCKQLGCGTALHFAGLPHLQSGSDVVWLDGVSCSGNESFLWDCRHSGTVNFDCLHQNDVSVICSDGADLELRLADGSNNCSGRVEVRIHEQWWTICDQNWKNEQALVVCKQLGCPFSVFGSRRAKPSNEARDIWINSISCTGNESALWDCTYDGKAKRTCFRRSDAGVICSDKADLDLRLVGAHSPCYGRLEVKYQGEWGTVCHDRWSTRNAAVVCKQLGCGKPLHVFGMTYFKEASGPIWLDDVSCIGNESNIWDCEHSGWGKHNCVHREDVIVTCSGDATWGLRLVGGSNRCSGRLEVYFQGRWGTVCDDGWNSKAAAVVCSQLDCPSSIIGMGLGNASTGYGKIWLDDVSCDGDESDLWSCRNSGWGNNDCSHSEDVGVICSDASDMELRLVGGSSRCAGKVEVNVQGAVGILCANGWGMNIAEVVCRQLECGSAIRVSREPHFTERTLHILMSNSGCTGGEASLWDCIRWEWKQTACHLNMEASLICSAHRQPRLVGADMPCSGRVEVKHADTWRSVCDSDFSLHAANVLCRELNCGDAISLSVGDHFGKGNGLTWAEKFQCEGSETHLALCPIVQHPEDTCIHSREVGVVCSRYTDVRLVNGKSQCDGQVEINVLGHWGSLCDTHWDPEDARVLCRQLSCGTALSTTGGKYIGERSVRVWGHRFHCLGNESLLDNCQMTVLGAPPCIHGNTVSVICTGSLTQPLFPCLANVSDPYLSAVPEGSALICLEDKRLRLVDGDSRCAGRVEIYHDGFWGTICDDGWDLSDAHVVCQKLGCGVAFNATVSAHFGEGSGPIWLDDLNCTGMESHLWQCPSRGWGQHDCRHKEDAGVICSEFTALRLYSETETESCAGRLEVFYNGTWGSVGRRNITTAIAGIVCRQLGCGENGVVSLAPLSKTGSGFMWVDDIQCPKTHISIWQCLSAPWERRISSPAEETWITCEDRIRVRGGDTECSGRVEIWHAGSWGTVCDDSWDLAEAEVVCQQLGCGSALAALRDASFGQGTGTIWLDDMRCKGNESFLWDCHAKPWGQSDCGHKEDAGVRCSGQSLKSLNASSGHLALILSSIFGLLLLVLFILFLTWCRVQKQKHLPLRVSTRRRGSLEENLFHEMETCLKREDPHGTRTSDDTPNHGCEDASDTSLLGVLPASEATK.

The N-terminal stretch at 1-40 (MMLPQNSWHIDFGRCCCHQNLFSAVVTCILLLNSCFLISS) is a signal peptide. Topologically, residues 41 to 1359 (FNGTDLELRL…LKSLNASSGH (1319 aa)) are extracellular. N-linked (GlcNAc...) asparagine glycosylation is found at N42, N78, N120, and N161. 9 consecutive SRCR domains span residues 48–148 (LRLV…VNCY), 155–255 (LRLV…LTCY), 262–362 (LRLV…VICS), 369–469 (LRLA…VICS), 476–576 (LRLV…VTCS), 583–683 (LRLV…VICS), 690–790 (LRLV…LICS), 795–895 (PRLV…VVCS), and 900–1000 (VRLV…VICT). Intrachain disulfides connect C73–C137, C86–C147, and C117–C127. Intrachain disulfides connect C180–C244, C193–C254, C224–C234, C287–C351, C300–C361, and C331–C341. N-linked (GlcNAc...) asparagine glycosylation is found at N334, N377, N441, N548, and N637. Intrachain disulfides connect C394-C458, C407-C468, C438-C448, C501-C565, C514-C575, C545-C555, C608-C672, C621-C682, C652-C662, C715-C779, C728-C789, C759-C769, C820-C884, C833-C894, C864-C874, C925-C989, C938-C999, and C969-C979. 4 N-linked (GlcNAc...) asparagine glycosylation sites follow: N972, N1013, N1084, and N1104. 3 consecutive SRCR domains span residues 1036–1136 (LRLV…VICS), 1141–1243 (LRLY…ITCE), and 1246–1346 (IRVR…VRCS). 3 disulfides stabilise this stretch: C1061–C1125, C1074–C1135, and C1105–C1115. N-linked (GlcNAc...) asparagine glycosylation is found at N1161 and N1171. Intrachain disulfides connect C1181–C1242, C1212–C1222, C1271–C1335, C1284–C1345, and C1315–C1325. N1318 and N1354 each carry an N-linked (GlcNAc...) asparagine glycan. A helical membrane pass occupies residues 1360–1380 (LALILSSIFGLLLLVLFILFL). Topologically, residues 1381–1453 (TWCRVQKQKH…GVLPASEATK (73 aa)) are cytoplasmic. The span at 1418–1435 (EDPHGTRTSDDTPNHGCE) shows a compositional bias: basic and acidic residues. The tract at residues 1418 to 1453 (EDPHGTRTSDDTPNHGCEDASDTSLLGVLPASEATK) is disordered.

Isoform 1 is highly expressed in the spleen, lymph nodes, thymus, and fetal liver and weakly expressed in bone marrow and no expression was found in peripheral blood leukocytes. Isoform 1 expression is restricted to the monocyte and macrophage cell lines. Isoform 2 is only expressed in spleen.

It is found in the cell membrane. The protein resides in the secreted. This chain is Scavenger receptor cysteine-rich type 1 protein M160 (CD163L1), found in Homo sapiens (Human).